We begin with the raw amino-acid sequence, 650 residues long: MLLLSGSVLLMASSLAWSAEFSASFKGTDIQEFINTVSKNLNKTVIIDPSVSGTITVRSYDMMNEEQYYQFFLSVLDVYGFTVIPMDNNVLKIIRSKDAKSTSMPLATDRQPGIGDEVVTRVVPVNNVAARDFGRSSRELNDNAWRGTCGDYEPANVVVMTGRAGVIHAVMTIVERVDQTGDRNVTTIPLSYASSTEVVKMVNELNKMDEKSALPGMLTANVVADERTNSAAGFGEPNSRQRVIDMVKQLDRQQAVQGNTKVIYLKYAKAADLVEVLTGVGDSIQTDQQNALPALRKDISIKAHEQTNSLIVNAAPDIMRDLEQVIAQLDIRRPQVLVEAIIAEVQDADGMNLGVQWANKNAGVTQFTNTGLPITTMMAGADQFRRDGTLGTAATTALGGFNGIAAGFYQGNWGMLMTALSSNSKNDILATPSIVTLDNMEATFNVGQEVPVLAGSQTTSGDNVFQTVERKTVGIKLKVKPQINEGDSVLLEIEQEVSSVADAASSSSTNLGATFNTRTVNNAVLVSSGDTVVVGGLLDKSTNESANKVPLLGDIPVLGYLFRSNSTETKKRNLMLFIRPSIIRDRSQFQSASASKYHSFSAEENKQRNVSNGEGGLLDNDLLRLPEGGNAYTFRQVQSSIVAFYPAGGK.

The first 18 residues, 1 to 18 (MLLLSGSVLLMASSLAWS), serve as a signal peptide directing secretion. Residues 20–115 (EFSASFKGTD…LATDRQPGIG (96 aa)) form an N0 region. The segment at 117–181 (EVVTRVVPVN…TIVERVDQTG (65 aa)) is N1. An N2 region spans residues 182–255 (DRNVTTIPLS…MVKQLDRQQA (74 aa)). The tract at residues 258–330 (GNTKVIYLKY…DLEQVIAQLD (73 aa)) is N3. A secretin region spans residues 335–585 (QVLVEAIIAE…LFIRPSIIRD (251 aa)). The tract at residues 587 to 650 (SQFQSASASK…IVAFYPAGGK (64 aa)) is s domain.

Belongs to the bacterial secretin family. GSP D subfamily. As to quaternary structure, forms a cylindrical channel with 15 subunits.

It is found in the cell outer membrane. Functionally, involved in a type II secretion system (T2SS, formerly general secretion pathway, GSP) for the export of proteins. Required for the translocation of the multiple pectic enzymes. This subunit forms the outer membrane channel. In Pectobacterium carotovorum subsp. carotovorum (Erwinia carotovora subsp. carotovora), this protein is Secretin OutD (outD).